The following is a 178-amino-acid chain: Cytochrome b6-f complex iron-sulfur subunit (178 aa).

Residues 20–42 (LLTFGTATGVALGALYPVANYFM) traverse the membrane as a helical segment. The 97-residue stretch at 65-161 (KTGWLATHQA…VDIEDDAVLV (97 aa)) folds into the Rieske domain. The [2Fe-2S] cluster site is built by cysteine 107, histidine 109, cysteine 125, and histidine 128. Residues cysteine 112 and cysteine 127 are joined by a disulfide bond.

It belongs to the Rieske iron-sulfur protein family. In terms of assembly, the 4 large subunits of the cytochrome b6-f complex are cytochrome b6, subunit IV (17 kDa polypeptide, PetD), cytochrome f and the Rieske protein, while the 4 small subunits are PetG, PetL, PetM and PetN. The complex functions as a dimer. [2Fe-2S] cluster serves as cofactor.

Its subcellular location is the cellular thylakoid membrane. It catalyses the reaction 2 oxidized [plastocyanin] + a plastoquinol + 2 H(+)(in) = 2 reduced [plastocyanin] + a plastoquinone + 4 H(+)(out). In terms of biological role, component of the cytochrome b6-f complex, which mediates electron transfer between photosystem II (PSII) and photosystem I (PSI), cyclic electron flow around PSI, and state transitions. The chain is Cytochrome b6-f complex iron-sulfur subunit from Prochlorococcus marinus (strain AS9601).